We begin with the raw amino-acid sequence, 452 residues long: FAD transporter (452 aa).

12 helical membrane-spanning segments follow: residues 21–41, 49–69, 96–116, 131–151, 167–187, 199–219, 248–270, 283–303, 324–344, 357–377, 392–412, and 417–437; these read LPNL…TFFI, LAAI…AIGV, ALLL…IFIE, LIHD…LLMV, MIMT…IFGI, AIAT…LLII, AALM…AHID, LESV…PFIA, FILV…QPLA, LSFY…VIIF, VINL…GSYI, and GLLL…YYLA.

The protein belongs to the multi antimicrobial extrusion (MATE) (TC 2.A.66.1) family.

The protein resides in the cell inner membrane. Functionally, flavin adenine dinucleotide (FAD) transporter that facilitates export of flavin electron shuttles. The sequence is that of FAD transporter from Shewanella oneidensis (strain ATCC 700550 / JCM 31522 / CIP 106686 / LMG 19005 / NCIMB 14063 / MR-1).